The sequence spans 627 residues: Protein fem-1 homolog B (627 aa).

ANK repeat units lie at residues 45 to 74, 87 to 116, 120 to 149, and 153 to 182; these read QRSTPLIIAARNGHAKVVRLLLEHYRVQTQ, DGATALWCAAGAGHFEVVKLLVSHGANVNH, TNSTPLRAACFDGRLDIVKYLVENNANISI, and YDNTCLMIAAYKGHTDVVRYLLEQRADPNA. Histidine 185, cysteine 186, and histidine 218 together coordinate Zn(2+). 2 ANK repeats span residues 186-215 and 218-248; these read CGATALHFAAEAGHIDIVKELIKWRAAIVV and HGMTPLKVAAESCKADVVELLLSHADCDRRS. One copy of the TPR repeat lies at 344-377; it reads SHPIIYRGAVYADNMEFEQCIKLWLHALHLRQKG. 2 ANK repeats span residues 483 to 527 and 531 to 568; these read EGFT…EVNA and EGNSALHIIVQYNRPISDFLTLHSIIISLVEAGAHTDM.

It belongs to the fem-1 family. As to quaternary structure, component of a CRL2 E3 ubiquitin-protein ligase complex, also named ECS (Elongin BC-CUL2/5-SOCS-box protein) complex, composed of CUL2, Elongin BC (ELOB and ELOC), RBX1 and substrate-specific adapter FEM1B. Homooligomer. Interacts with PPM1F and PHTF1. Interacts with the death domain of FAS/TNFRSF6 and TNFRSF1A. Interacts with CHEK1. Interacts with NKX3-1. Present in adult testis (at protein level).

The protein localises to the cytoplasm. It is found in the nucleus. It functions in the pathway protein modification; protein ubiquitination. Its activity is regulated as follows. Activity of the CRL2(FEM1B) complex toward FNIP1 is inhibited by BEX family proteins (BEX1, BEX2, BEX3 and/or BEX4) in absence of reductive stress. Mechanistically, BEX proteins act as pseudosubstrate inhibitors that associate with FEM1B via zinc in absence of reductive stress, thereby preventing association between FEM1B and FNIP1. Substrate-recognition component of a Cul2-RING (CRL2) E3 ubiquitin-protein ligase complex of the DesCEND (destruction via C-end degrons) pathway, which recognizes a C-degron located at the extreme C terminus of target proteins, leading to their ubiquitination and degradation. The C-degron recognized by the DesCEND pathway is usually a motif of less than ten residues and can be present in full-length proteins, truncated proteins or proteolytically cleaved forms. The CRL2(FEM1B) complex specifically recognizes proteins ending with -Gly-Leu-Asp-Arg, such as CDK5R1, leading to their ubiquitination and degradation. Also acts as a regulator of the reductive stress response by mediating ubiquitination of reduced FNIP1: in response to reductive stress, the CRL2(FEM1B) complex specifically recognizes a conserved Cys degron in FNIP1 when this degron is reduced, leading to FNIP1 degradation and subsequent activation of mitochondria to recalibrate reactive oxygen species (ROS). Mechanistically, recognizes and binds reduced FNIP1 through two interface zinc ions, which act as a molecular glue that recruit reduced FNIP1 to FEM1B. Promotes ubiquitination of GLI1, suppressing GLI1 transcriptional activator activity. Promotes ubiquitination and degradation of ANKRD37. Promotes ubiquitination and degradation of SLBP. Involved in apoptosis by acting as a death receptor-associated protein that mediates apoptosis. Also involved in glucose homeostasis in pancreatic islet. May also act as an adapter/mediator in replication stress-induced signaling that leads to the activation of CHEK1. The chain is Protein fem-1 homolog B from Rattus norvegicus (Rat).